Here is a 174-residue protein sequence, read N- to C-terminus: NADH-ubiquinone oxidoreductase chain 6 (174 aa).

5 helical membrane passes run 1–21 (MTYT…GFSS), 24–44 (SPIY…AVIL), 47–67 (GGGY…MVVF), 86–106 (VEVL…VLWA), and 151–171 (WLVV…IEIA).

The protein belongs to the complex I subunit 6 family. Core subunit of respiratory chain NADH dehydrogenase (Complex I) which is composed of 45 different subunits.

Its subcellular location is the mitochondrion inner membrane. It catalyses the reaction a ubiquinone + NADH + 5 H(+)(in) = a ubiquinol + NAD(+) + 4 H(+)(out). Core subunit of the mitochondrial membrane respiratory chain NADH dehydrogenase (Complex I) which catalyzes electron transfer from NADH through the respiratory chain, using ubiquinone as an electron acceptor. Essential for the catalytic activity and assembly of complex I. This chain is NADH-ubiquinone oxidoreductase chain 6 (MT-ND6), found in Hylobates lar (Lar gibbon).